A 418-amino-acid polypeptide reads, in one-letter code: Trans-acting enoyl reductase (418 aa).

Belongs to the saccharopine dehydrogenase family. Enoyl reductase subfamily.

Involved in the reduction of the double bond between C-4 and C-5 during phthiocerol dimycocerosates (DIM A) and glycosylated phenolphthiocerol dimycocerosates (PGL) biosynthesis. This Mycobacterium tuberculosis (strain ATCC 25177 / H37Ra) protein is Trans-acting enoyl reductase.